A 62-amino-acid polypeptide reads, in one-letter code: Statherin (62 aa).

The N-terminal stretch at 1–19 (MKFLVFAFILALMVSMIGA) is a signal peptide. The hydroxyapatite-binding; inhibits crystal growth stretch occupies residues 20 to 25 (DSSEEK). Phosphoserine is present on residues Ser-21 and Ser-22. The segment at residues 25 to 56 (KFLRRIGRFGYGYGPYQPVPEQPLYPQPYQPQ) is a cross-link (isoglutamyl lysine isopeptide (Lys-Gln); in form cyclo-statherin Q-37). The isoglutamyl lysine isopeptide (Lys-Gln); in form cyclo-statherin Q-39 cross-link spans 25–58 (KFLRRIGRFGYGYGPYQPVPEQPLYPQPYQPQYQ). The hydrophobic; inhibits precipitation of calcium phosphate salts stretch occupies residues 38-62 (GPYQPVPEQPLYPQPYQPQYQQYTF).

It belongs to the histatin/statherin family. In terms of processing, substrate for transglutaminase-2. More than 95% of the cyclized peptide is cyclo-statherin Q-37, and less than 5% is cyclo-statherin Q-39. Cyclized forms account for about 1% of total statherin in saliva. Post-translationally, sulfated on tyrosine residues. In terms of tissue distribution, secreted by parotid and submandibular glands.

It is found in the secreted. In terms of biological role, salivary protein that stabilizes saliva supersaturated with calcium salts by inhibiting the precipitation of calcium phosphate salts. It also modulates hydroxyapatite crystal formation on the tooth surface. This Homo sapiens (Human) protein is Statherin (STATH).